Here is a 565-residue protein sequence, read N- to C-terminus: Thiol:disulfide interchange protein DsbD (565 aa).

The signal sequence occupies residues 1-19 (MAQRIFTLILLLCSTSVFA). 2 cysteine pairs are disulfide-bonded: Cys122-Cys128 and Cys182-Cys304. Helical transmembrane passes span 163–183 (LPFS…TPCV), 208–228 (LLTF…GLVV), 243–263 (YVLI…FGLF), 289–309 (GVFI…TAPL), 323–343 (WLGG…LMLI), 357–377 (WMEQ…VFLL), and 384–404 (IWGL…AFIT). The Thioredoxin domain maps to 434 to 565 (WAFGETHTAQ…FSAHLRDRQP (132 aa)). An intrachain disulfide couples Cys480 to Cys483.

The protein belongs to the thioredoxin family. DsbD subfamily.

The protein localises to the cell inner membrane. It carries out the reaction [protein]-dithiol + NAD(+) = [protein]-disulfide + NADH + H(+). It catalyses the reaction [protein]-dithiol + NADP(+) = [protein]-disulfide + NADPH + H(+). Its function is as follows. Required to facilitate the formation of correct disulfide bonds in some periplasmic proteins and for the assembly of the periplasmic c-type cytochromes. Acts by transferring electrons from cytoplasmic thioredoxin to the periplasm. This transfer involves a cascade of disulfide bond formation and reduction steps. In Escherichia coli O6:K15:H31 (strain 536 / UPEC), this protein is Thiol:disulfide interchange protein DsbD.